Consider the following 259-residue polypeptide: tRNA pseudouridine synthase A (259 aa).

Asp50 serves as the catalytic Nucleophile. Tyr101 contributes to the substrate binding site.

It belongs to the tRNA pseudouridine synthase TruA family.

It catalyses the reaction uridine(38/39/40) in tRNA = pseudouridine(38/39/40) in tRNA. Its function is as follows. Formation of pseudouridine at positions 38, 39 and 40 in the anticodon stem and loop of transfer RNAs. The chain is tRNA pseudouridine synthase A from Methanocaldococcus jannaschii (strain ATCC 43067 / DSM 2661 / JAL-1 / JCM 10045 / NBRC 100440) (Methanococcus jannaschii).